The following is a 407-amino-acid chain: Lysosome-associated membrane glycoprotein 1 (407 aa).

Residues 1–21 (MAAPGARRPLLLLLLAGLAHS) form the signal peptide. The interval 22 to 189 (APALFEVKDN…SKEETRCPQD (168 aa)) is first lumenal domain. Over 22–371 (APALFEVKDN…VEECVQDGNN (350 aa)) the chain is Lumenal. N-linked (GlcNAc...) asparagine glycans are attached at residues asparagine 32, asparagine 59, asparagine 71, asparagine 79, asparagine 102, asparagine 116, asparagine 125, asparagine 145, asparagine 160, and asparagine 178. Cysteine 36 and cysteine 75 form a disulfide bridge. An intrachain disulfide couples cysteine 150 to cysteine 186. A disordered region spans residues 180–211 (SKEETRCPQDQPSPTTGPPSPSPPLVPTNPSV). The interval 190–219 (QPSPTTGPPSPSPPLVPTNPSVSKYNVTGD) is hinge. Positions 194–206 (TTGPPSPSPPLVP) are enriched in pro residues. 8 N-linked (GlcNAc...) asparagine glycosylation sites follow: asparagine 215, asparagine 220, asparagine 233, asparagine 241, asparagine 271, asparagine 283, asparagine 297, and asparagine 312. The tract at residues 220–371 (NGTCLLASMA…VEECVQDGNN (152 aa)) is second lumenal domain. The cysteines at positions 223 and 260 are disulfide-linked. A disulfide bridge links cysteine 328 with cysteine 365. The helical transmembrane segment at 372-395 (MLIPIAVGGALAGLVLIVLIAYLI) threads the bilayer. Residues 396–407 (GRKRSHAGYQTI) are Cytoplasmic-facing.

Belongs to the LAMP family. As to quaternary structure, interacts with ABCB9; this interaction strongly stabilizes ABCB9 and protects ABCB9 against lysosomal degradation. Interacts with FURIN. Interacts with TMEM175; inhibiting the proton channel activity of TMEM175. Post-translationally, O- and N-glycosylated; some of the N-glycans attached to LAMP-1 are polylactosaminoglycans.

It localises to the lysosome membrane. It is found in the endosome membrane. The protein localises to the late endosome membrane. Its subcellular location is the cell membrane. The protein resides in the cytolytic granule membrane. Functionally, lysosomal membrane glycoprotein which plays an important role in lysosome biogenesis, lysosomal pH regulation, autophagy and cholesterol homeostasis. Acts as an important regulator of lysosomal lumen pH regulation by acting as a direct inhibitor of the proton channel TMEM175, facilitating lysosomal acidification for optimal hydrolase activity. Also plays an important role in NK-cells cytotoxicity. Mechanistically, participates in cytotoxic granule movement to the cell surface and perforin trafficking to the lytic granule. In addition, protects NK-cells from degranulation-associated damage induced by their own cytotoxic granule content. Presents carbohydrate ligands to selectins. The chain is Lysosome-associated membrane glycoprotein 1 (Lamp1) from Rattus norvegicus (Rat).